A 426-amino-acid chain; its full sequence is Proline--tRNA ligase (426 aa).

Belongs to the class-II aminoacyl-tRNA synthetase family. ProS type 2 subfamily. Homodimer.

It localises to the cytoplasm. It catalyses the reaction tRNA(Pro) + L-proline + ATP = L-prolyl-tRNA(Pro) + AMP + diphosphate. Catalyzes the attachment of proline to tRNA(Pro) in a two-step reaction: proline is first activated by ATP to form Pro-AMP and then transferred to the acceptor end of tRNA(Pro). The protein is Proline--tRNA ligase of Rickettsia africae (strain ESF-5).